Reading from the N-terminus, the 610-residue chain is Mitochondrial import receptor subunit TOM70 (610 aa).

Position 2 is an N-acetylalanine (alanine 2). Residues 2-41 are Mitochondrial intermembrane-facing; sequence AASKPVEAAMAAAAAPASGNGVGSSGGTAAPGSGAGTLPR. A helical transmembrane segment spans residues 42 to 62; it reads WHVALAIGAPLLLGAGAMYLW. The Cytoplasmic portion of the chain corresponds to 63 to 610; that stretch reads SRRRRRREAG…KKYGLKPPTL (548 aa). Residues 69-109 are disordered; sequence REAGGRGDASGLKRNSERKTPEGRASPALGSGPDGSGDSLE. Arginine 74 is modified (omega-N-methylarginine). Residues 93 to 108 are compositionally biased toward low complexity; the sequence is ASPALGSGPDGSGDSL. Residues serine 94, serine 99, serine 104, serine 107, and serine 112 each carry the phosphoserine modification. TPR repeat units follow at residues 116 to 149 and 155 to 188; these read AQAA…CPTE and STFY…NPKY. N6-acetyllysine is present on lysine 187. Lysine 277 participates in a covalent cross-link: Glycyl lysine isopeptide (Lys-Gly) (interchain with G-Cter in SUMO2). TPR repeat units lie at residues 296-329, 331-364, 369-402, 403-436, 444-477, 478-511, 513-546, and 547-580; these read ENSG…QGKY, AEAL…KEAN, ANAL…DPMN, SDVY…RPKF, CFAL…FPRC, AEGY…EPDN, TTYV…DNKC, and DFAY…AKSE.

This sequence belongs to the Tom70 family. In terms of assembly, forms part of the preprotein translocase complex of the outer mitochondrial membrane (TOM complex) which consists of at least 7 different proteins (TOMM5, TOMM6, TOMM7, TOMM20, TOMM22, TOMM40 and TOMM70). Interacts with CAPN8. Interacts with TRADD, TRAF6 and STING. Interacts with MAVS. Interacts with HSPA8 and HSP90AA1; both interactions are required for preprotein mitochondrial import. The interaction with HSP90AA1 is direct and mediates the association of TOMM70 with IRF3 and TBK1. Upon mitochondrial depolarization, interacts with PINK1; the interaction is required for PINK1-TOM-TIM23 supercomplex formation which is critical for PINK1 stabilization at the outer mitochondrial membrane, kinase activation and downstream mitophagy.

The protein resides in the mitochondrion outer membrane. Acts as a receptor of the preprotein translocase complex of the outer mitochondrial membrane (TOM complex). Recognizes and mediates the translocation of mitochondrial preproteins from the cytosol into the mitochondria in a chaperone dependent manner. Mediates TBK1 and IRF3 activation induced by MAVS in response to Sendai virus infection and promotes host antiviral responses during virus infection. The chain is Mitochondrial import receptor subunit TOM70 from Rattus norvegicus (Rat).